The chain runs to 193 residues: CRIB domain-containing protein RIC5 (193 aa).

Residues 29–42 (IGIPTDVKHVAHIG) enclose the CRIB domain. Residues 42–193 (GWEGPSATTP…CAGLGSSTGR (152 aa)) are disordered. The segment covering 55-67 (HDFKPTDQTKTET) has biased composition (basic and acidic residues). A compositionally biased stretch (polar residues) spans 90–100 (STGNNSPTESP). Residues 123–134 (GSGSESGSGLEL) show a composition bias toward low complexity.

As to quaternary structure, interacts with ARAC11/ROP1. In terms of tissue distribution, expressed in flowers and pollen.

Its subcellular location is the cell membrane. Its function is as follows. Functions as a downstream effector of Rho-related GTP binding proteins of the 'Rho of Plants' (ROPs) family. Participates in the propagation of ROP GTPase signals in specific cellular responses. Is involved in pollen tube growth regulation through its interaction with ARAC11/ROP1. The protein is CRIB domain-containing protein RIC5 (RIC5) of Arabidopsis thaliana (Mouse-ear cress).